Consider the following 295-residue polypeptide: Acetyl-coenzyme A carboxylase carboxyl transferase subunit beta (295 aa).

Residues 1 to 20 (MSWLSKLMPSGIRTENTPAK) are disordered. The region spanning 28 to 295 (LWEKCSNCGS…QPHPQDADAA (268 aa)) is the CoA carboxyltransferase N-terminal domain. 4 residues coordinate Zn(2+): Cys32, Cys35, Cys51, and Cys54. The segment at 32–54 (CSNCGSALYGPELEENLEVCPKC) adopts a C4-type zinc-finger fold.

Belongs to the AccD/PCCB family. In terms of assembly, acetyl-CoA carboxylase is a heterohexamer composed of biotin carboxyl carrier protein (AccB), biotin carboxylase (AccC) and two subunits each of ACCase subunit alpha (AccA) and ACCase subunit beta (AccD). The cofactor is Zn(2+).

Its subcellular location is the cytoplasm. The catalysed reaction is N(6)-carboxybiotinyl-L-lysyl-[protein] + acetyl-CoA = N(6)-biotinyl-L-lysyl-[protein] + malonyl-CoA. The protein operates within lipid metabolism; malonyl-CoA biosynthesis; malonyl-CoA from acetyl-CoA: step 1/1. Functionally, component of the acetyl coenzyme A carboxylase (ACC) complex. Biotin carboxylase (BC) catalyzes the carboxylation of biotin on its carrier protein (BCCP) and then the CO(2) group is transferred by the transcarboxylase to acetyl-CoA to form malonyl-CoA. This chain is Acetyl-coenzyme A carboxylase carboxyl transferase subunit beta, found in Xanthomonas euvesicatoria pv. vesicatoria (strain 85-10) (Xanthomonas campestris pv. vesicatoria).